A 1109-amino-acid polypeptide reads, in one-letter code: Receptor-like protein kinase (1109 aa).

The first 20 residues, 1-20 (MKVAVNTFLLFLCSTSSIYA), serve as a signal peptide directing secretion. The Extracellular segment spans residues 21–764 (AFALNSDGAA…GGLSTLGIAM (744 aa)). Asparagine 50, asparagine 74, and asparagine 114 each carry an N-linked (GlcNAc...) asparagine glycan. LRR repeat units follow at residues 69–92 (FVDT…SHLK), 93–115 (HLKK…LGNC), 117–140 (LLEH…GALQ), 141–162 (NLRN…SLLS), 165–187 (HLET…IGNM), and 189–209 (ELTT…SSLG). N-linked (GlcNAc...) asparagine glycans are attached at residues asparagine 144, asparagine 177, and asparagine 186. N-linked (GlcNAc...) asparagine glycosylation is present at asparagine 210. LRR repeat units follow at residues 213-236 (TLQE…NNLE), 237-258 (NLVY…DFVS), 261-284 (QIDT…GNCT), 309-331 (KLDT…LGKC), 333-355 (SMID…LGML), 357-378 (QLQY…SIWK), 381-404 (SLQS…TELK), 405-427 (QLVS…LGAN), 429-451 (SLEV…LCSQ), 453-476 (KLKR…GGCS), 477-499 (TLER…VEKQ), 500-523 (NLLF…GNLK), 524-546 (NVTA…LGSL), 548-569 (KLEH…ELSN), 572-595 (KLSE…GSLT), 596-618 (ELTK…LFQS), 620-642 (KLLN…GALQ), 643-666 (ALRS…GKLK), 667-689 (MLEE…STIQ), and 690-710 (SLTF…PSLT). Residues asparagine 245 and asparagine 282 are each glycosylated (N-linked (GlcNAc...) asparagine). N-linked (GlcNAc...) asparagine glycans are attached at residues asparagine 367, asparagine 391, and asparagine 427. Asparagine 510, asparagine 524, asparagine 553, and asparagine 584 each carry an N-linked (GlcNAc...) asparagine glycan. 3 N-linked (GlcNAc...) asparagine glycosylation sites follow: asparagine 648, asparagine 677, and asparagine 695. A helical membrane pass occupies residues 765–785 (IVLGALLFIICLFLFSAFLFL). The Cytoplasmic segment spans residues 786 to 1109 (HCKKSVQEIA…YSSSVRNKSK (324 aa)). The Protein kinase domain occupies 816–1096 (LNDKYVIGKG…DVVKQLTRWS (281 aa)). ATP is bound by residues 822–830 (IGKGAHGTI) and lysine 845. An LRR 27 repeat occupies 827-850 (HGTIYKATLSPDKVYAVKKLVFTG). Aspartate 942 serves as the catalytic Proton acceptor. The LRR 28 repeat unit spans residues 958 to 981 (ISDFGIAKLLDQSATSIPSNTVQG).

This sequence belongs to the protein kinase superfamily. Ser/Thr protein kinase family. In terms of tissue distribution, INRPK1 and INRPK1b are expressed in leaves, cotyledons, shoot tips and roots from induced and vegetative plants. The highest concentrations of INRPK1 are found in vegetative roots, and the lowest concentrations in vegetative cotyledons. INRPK1b is more abundant in roots than other tissues. INRPK1a is expressed in vegetative roots. INRPK1c is expressed in cotyledons.

Its subcellular location is the cell membrane. It localises to the secreted. The catalysed reaction is L-seryl-[protein] + ATP = O-phospho-L-seryl-[protein] + ADP + H(+). It catalyses the reaction L-threonyl-[protein] + ATP = O-phospho-L-threonyl-[protein] + ADP + H(+). Functionally, possible role in short-day photoperiod floral induction. The protein is Receptor-like protein kinase (INRPK1) of Ipomoea nil (Japanese morning glory).